The chain runs to 402 residues: Phosphoglycerate kinase (402 aa).

Substrate contacts are provided by residues 24–26 (DFN), Arg-40, 63–66 (HFGR), Arg-122, and Arg-155. ATP-binding positions include Lys-206, Gly-297, Glu-328, and 358–361 (GGDS).

This sequence belongs to the phosphoglycerate kinase family. Monomer.

The protein resides in the cytoplasm. It carries out the reaction (2R)-3-phosphoglycerate + ATP = (2R)-3-phospho-glyceroyl phosphate + ADP. Its pathway is carbohydrate degradation; glycolysis; pyruvate from D-glyceraldehyde 3-phosphate: step 2/5. The protein is Phosphoglycerate kinase of Prochlorococcus marinus (strain MIT 9515).